A 657-amino-acid polypeptide reads, in one-letter code: Glycogen debranching enzyme (657 aa).

Asp-336 functions as the Nucleophile in the catalytic mechanism. Glu-371 acts as the Proton donor in catalysis. The disordered stretch occupies residues 460-479 (ANGEENRDGTNNNYSNNHGK).

Belongs to the glycosyl hydrolase 13 family.

It carries out the reaction Hydrolysis of (1-&gt;6)-alpha-D-glucosidic linkages to branches with degrees of polymerization of three or four glucose residues in limit dextrin.. It participates in glycan degradation; glycogen degradation. In terms of biological role, removes maltotriose and maltotetraose chains that are attached by 1,6-alpha-linkage to the limit dextrin main chain, generating a debranched limit dextrin. The polypeptide is Glycogen debranching enzyme (Escherichia coli O81 (strain ED1a)).